Here is a 351-residue protein sequence, read N- to C-terminus: Glycerol-1-phosphate dehydrogenase [NAD(P)+] (351 aa).

NAD(+)-binding positions include 97–101 (GKVID) and 119–122 (TSPS). D124 is a substrate binding site. An NAD(+)-binding site is contributed by S128. D171 contacts substrate. D171 and H251 together coordinate Zn(2+). Position 255 (H255) interacts with substrate. H267 is a Zn(2+) binding site.

It belongs to the glycerol-1-phosphate dehydrogenase family. In terms of assembly, homodimer. The cofactor is Zn(2+).

It localises to the cytoplasm. It catalyses the reaction sn-glycerol 1-phosphate + NAD(+) = dihydroxyacetone phosphate + NADH + H(+). The enzyme catalyses sn-glycerol 1-phosphate + NADP(+) = dihydroxyacetone phosphate + NADPH + H(+). It functions in the pathway membrane lipid metabolism; glycerophospholipid metabolism. Its function is as follows. Catalyzes the NAD(P)H-dependent reduction of dihydroxyacetonephosphate (DHAP or glycerone phosphate) to glycerol 1-phosphate (G1P). The G1P thus generated is used as the glycerophosphate backbone of phospholipids in the cellular membranes of Archaea. The sequence is that of Glycerol-1-phosphate dehydrogenase [NAD(P)+] from Saccharolobus islandicus (strain M.16.27) (Sulfolobus islandicus).